The sequence spans 381 residues: rRNA adenine N-6-methyltransferase (381 aa).

Over residues 1–19 (MSSSDEQPRPRRRNQDRQH) the composition is skewed to basic and acidic residues. Residues 1 to 42 (MSSSDEQPRPRRRNQDRQHPNQNRPVLGRTERDRNRRQFGQN) form a disordered region. N42, L44, G69, E90, D115, and A131 together coordinate S-adenosyl-L-methionine. The segment at 282 to 381 (RLDQKNEPRG…PGRRGGPGQR (100 aa)) is disordered. A compositionally biased stretch (basic and acidic residues) spans 301 to 358 (GGRDHGDRRTGGQDRGDRRTGGRDHRDRQASGHGDRRSSGRNRDDGRTGEREQGDQGG). A compositionally biased stretch (gly residues) spans 359–381 (RRGPSGGGRTGGRPGRRGGPGQR).

The protein belongs to the class I-like SAM-binding methyltransferase superfamily. rRNA adenine N(6)-methyltransferase family.

The enzyme catalyses adenosine(2085) in 23S rRNA + 2 S-adenosyl-L-methionine = N(6)-dimethyladenosine(2085) in 23S rRNA + 2 S-adenosyl-L-homocysteine + 2 H(+). This protein produces a dimethylation of the adenine residue at position 2085 in 23S rRNA, resulting in reduced affinity between ribosomes and macrolide-lincosamide-streptogramin B antibiotics. The chain is rRNA adenine N-6-methyltransferase (ermE) from Saccharopolyspora erythraea (strain ATCC 11635 / DSM 40517 / JCM 4748 / NBRC 13426 / NCIMB 8594 / NRRL 2338).